We begin with the raw amino-acid sequence, 1496 residues long: DNA-directed RNA polymerase subunit beta' (1496 aa).

Positions 70, 72, 85, and 88 each coordinate Zn(2+). Mg(2+) is bound by residues D461, D463, and D465. Residues C908, C982, C989, and C992 each coordinate Zn(2+). Positions 1467 to 1496 are disordered; sequence DKDMQVEGESEVPAIPPVAEGSAPEAPPAE.

It belongs to the RNA polymerase beta' chain family. The RNAP catalytic core consists of 2 alpha, 1 beta, 1 beta' and 1 omega subunit. When a sigma factor is associated with the core the holoenzyme is formed, which can initiate transcription. Mg(2+) is required as a cofactor. Requires Zn(2+) as cofactor.

The catalysed reaction is RNA(n) + a ribonucleoside 5'-triphosphate = RNA(n+1) + diphosphate. In terms of biological role, DNA-dependent RNA polymerase catalyzes the transcription of DNA into RNA using the four ribonucleoside triphosphates as substrates. The polypeptide is DNA-directed RNA polymerase subunit beta' (Paramagnetospirillum magneticum (strain ATCC 700264 / AMB-1) (Magnetospirillum magneticum)).